We begin with the raw amino-acid sequence, 357 residues long: Ubiquitin carboxyl-terminal hydrolase 2 (357 aa).

Positions 19–351 (TGLRNLGNTC…DAYLLFYELA (333 aa)) constitute a USP domain. C28 acts as the Nucleophile in catalysis. Residues C177, C180, C228, and C231 each coordinate Zn(2+). Residue H309 is the Proton acceptor of the active site.

Belongs to the peptidase C19 family. USP2 subfamily. Homooligomer.

The protein localises to the cytoplasm. It localises to the perinuclear region. The enzyme catalyses Thiol-dependent hydrolysis of ester, thioester, amide, peptide and isopeptide bonds formed by the C-terminal Gly of ubiquitin (a 76-residue protein attached to proteins as an intracellular targeting signal).. Hydrolase that deubiquitinates polyubiquitinated target proteins such as MDM2, MDM4 and CCND1. Possesses both ubiquitin-specific peptidase and isopeptidase activities. May play a role in the regulation of the circadian clock. The sequence is that of Ubiquitin carboxyl-terminal hydrolase 2 (USP2) from Gallus gallus (Chicken).